A 252-amino-acid chain; its full sequence is MVDPLCNYNVLESIFSYLELNDLNRCSQVCKSWYHFLNDENSDVWRWHCLRKLPKEAVKSDLLSSVTTYKTKLRAYLHAWSPNDCSRNVYVKPNGFTLHRNPVAQSTDAARGKIGFRHGRHAWEVIWEGPLGTVAVIGISTKEAALQCHGYVALLGSDDQSWGWNLVENHLLHNGDTQGSYPLLNNAPKYQVGERIRVILDCDDNTLSFEKNYEFLGVAFRGLPDKKLYPTVSAVYGNTEVSMVYLGTPLDG.

The F-box domain occupies 1–48; the sequence is MVDPLCNYNVLESIFSYLELNDLNRCSQVCKSWYHFLNDENSDVWRWH. Positions 58–250 constitute a B30.2/SPRY domain; it reads VKSDLLSSVT…VSMVYLGTPL (193 aa).

It belongs to the FBXO45/Fsn family. As to quaternary structure, component of an E3 ubiquitin ligase complex composed of hiw and Fsn.

The protein resides in the synapse. It functions in the pathway protein modification; protein ubiquitination. Required in the presynaptic motoneuron to down-regulate the levels of wnd and restrain synaptic terminal growth at the neuromuscular junction (NMJ). This chain is F-box/SPRY domain-containing protein 1, found in Drosophila grimshawi (Hawaiian fruit fly).